We begin with the raw amino-acid sequence, 601 residues long: Threonine dehydratase (601 aa).

Residues 1–51 (MEVLCQAPAGNSNFACNPKFTAIRTRAISSNDTFKVISSTGNNKKMKGAIR) constitute a chloroplast transit peptide. ACT-like domains follow at residues 427–499 (ALLA…NLTN) and 521–592 (IFCQ…IESL).

This sequence belongs to the serine/threonine dehydratase family. Pyridoxal 5'-phosphate serves as cofactor.

It is found in the plastid. Its subcellular location is the chloroplast. The catalysed reaction is L-threonine = 2-oxobutanoate + NH4(+). Its pathway is amino-acid biosynthesis; L-isoleucine biosynthesis; 2-oxobutanoate from L-threonine: step 1/1. Its function is as follows. Catalyzes the conversion of threonine to alpha-keto butyrate in isoleucine (Ile) biosynthesis. Required for JA-Ile biosynthesis, a signaling molecule involved in defense and resistance to the herbivore Manduca sexta caterpillars. The protein is Threonine dehydratase of Nicotiana attenuata (Coyote tobacco).